Here is an 888-residue protein sequence, read N- to C-terminus: Alanine--tRNA ligase (888 aa).

Positions 564, 568, 676, and 680 each coordinate Zn(2+).

Belongs to the class-II aminoacyl-tRNA synthetase family. It depends on Zn(2+) as a cofactor.

Its subcellular location is the cytoplasm. The enzyme catalyses tRNA(Ala) + L-alanine + ATP = L-alanyl-tRNA(Ala) + AMP + diphosphate. Catalyzes the attachment of alanine to tRNA(Ala) in a two-step reaction: alanine is first activated by ATP to form Ala-AMP and then transferred to the acceptor end of tRNA(Ala). Also edits incorrectly charged Ser-tRNA(Ala) and Gly-tRNA(Ala) via its editing domain. The protein is Alanine--tRNA ligase of Bartonella tribocorum (strain CIP 105476 / IBS 506).